The sequence spans 1132 residues: SNF2 domain-containing protein CLASSY 4 (1132 aa).

4 disordered regions span residues 24 to 104 (NKSK…SKSF), 224 to 331 (LRGE…HHKK), 376 to 396 (DPVV…PRER), and 525 to 544 (PSVN…LPNR). The Nuclear localization signal signature appears at 47–54 (KRRVNMRD). Basic and acidic residues predominate over residues 81 to 90 (EYPEGKRDDE). Over residues 92 to 103 (VGSTSGNLQSKS) the composition is skewed to polar residues. Residues 233-242 (SDEVVSLSSS) show a composition bias toward low complexity. The segment covering 243–254 (SDDEEDPLEELG) has biased composition (acidic residues). The span at 255-269 (TDSREEVSGEDRDSG) shows a compositional bias: basic and acidic residues. Composition is skewed to acidic residues over residues 270 to 282 (ESDM…DSDS) and 291 to 309 (DSSD…EDEE). Composition is skewed to basic and acidic residues over residues 310–326 (GGTR…SEKV), 376–392 (DPVV…EHGK), and 525–539 (PSVN…RKGD). The region spanning 603–796 (SVGVKGSGGC…SNVLCLARPA (194 aa)) is the Helicase ATP-binding domain. 616–623 (HKAGTGKT) serves as a coordination point for ATP. The DEAH box signature appears at 747–750 (DEGH). The region spanning 934–1087 (DFIRISGTVK…ELVFSSTNEK (154 aa)) is the Helicase C-terminal domain.

It belongs to the SNF2/RAD54 helicase family. As to quaternary structure, interacts with NRPD1.

The protein localises to the nucleus. Functionally, probable chromatin remodeling factor. In Arabidopsis thaliana (Mouse-ear cress), this protein is SNF2 domain-containing protein CLASSY 4 (CLSY4).